The primary structure comprises 324 residues: Probable fructokinase-5 (324 aa).

The protein belongs to the carbohydrate kinase PfkB family.

The enzyme catalyses D-fructose + ATP = D-fructose 6-phosphate + ADP + H(+). The protein operates within glycan biosynthesis; starch biosynthesis. Its function is as follows. May play an important role in maintaining the flux of carbon towards starch formation. In Arabidopsis thaliana (Mouse-ear cress), this protein is Probable fructokinase-5.